The primary structure comprises 212 residues: uncharacterized protein (212 aa).

This is an uncharacterized protein from Aquifex aeolicus (strain VF5).